Consider the following 479-residue polypeptide: tRNA-2-methylthio-N(6)-dimethylallyladenosine synthase (479 aa).

The region spanning 3–120 is the MTTase N-terminal domain; sequence KKLYIKTWGC…LPEMVNQVSE (118 aa). [4Fe-4S] cluster-binding residues include cysteine 12, cysteine 49, cysteine 83, cysteine 157, cysteine 161, and cysteine 164. The 233-residue stretch at 143–375 folds into the Radical SAM core domain; that stretch reads KADGASAFVS…QQRLNQQSMA (233 aa). A TRAM domain is found at 378 to 441; sequence RRMLETEQRI…PNSLRGELIR (64 aa).

It belongs to the methylthiotransferase family. MiaB subfamily. As to quaternary structure, monomer. Requires [4Fe-4S] cluster as cofactor.

It is found in the cytoplasm. The enzyme catalyses N(6)-dimethylallyladenosine(37) in tRNA + (sulfur carrier)-SH + AH2 + 2 S-adenosyl-L-methionine = 2-methylsulfanyl-N(6)-dimethylallyladenosine(37) in tRNA + (sulfur carrier)-H + 5'-deoxyadenosine + L-methionine + A + S-adenosyl-L-homocysteine + 2 H(+). In terms of biological role, catalyzes the methylthiolation of N6-(dimethylallyl)adenosine (i(6)A), leading to the formation of 2-methylthio-N6-(dimethylallyl)adenosine (ms(2)i(6)A) at position 37 in tRNAs that read codons beginning with uridine. The polypeptide is tRNA-2-methylthio-N(6)-dimethylallyladenosine synthase (Idiomarina loihiensis (strain ATCC BAA-735 / DSM 15497 / L2-TR)).